The sequence spans 400 residues: Diphosphomevalonate decarboxylase (400 aa).

N-acetylalanine is present on Ala-2. Residues 23–26 (YWGK) and Arg-78 contribute to the (R)-5-diphosphomevalonate site. Ser-96 carries the post-translational modification Phosphoserine. Residues 156-161 (SGSACR) and Thr-212 contribute to the (R)-5-diphosphomevalonate site.

Belongs to the diphosphomevalonate decarboxylase family. In terms of assembly, homodimer. In terms of tissue distribution, expressed in heart, skeletal muscle, lung, liver, brain, pancreas, kidney and placenta.

The protein localises to the cytoplasm. The enzyme catalyses (R)-5-diphosphomevalonate + ATP = isopentenyl diphosphate + ADP + phosphate + CO2. Its pathway is steroid biosynthesis; cholesterol biosynthesis. Its function is as follows. Catalyzes the ATP dependent decarboxylation of (R)-5-diphosphomevalonate to form isopentenyl diphosphate (IPP). Functions in the mevalonate (MVA) pathway leading to isopentenyl diphosphate (IPP), a key precursor for the biosynthesis of isoprenoids and sterol synthesis. The chain is Diphosphomevalonate decarboxylase (MVD) from Homo sapiens (Human).